Consider the following 629-residue polypeptide: 1-deoxy-D-xylulose-5-phosphate synthase (629 aa).

Thiamine diphosphate contacts are provided by residues histidine 78 and 119-121; that span reads AHS. Residue aspartate 150 participates in Mg(2+) binding. Residues 151–152, asparagine 179, tyrosine 286, and glutamate 368 each bind thiamine diphosphate; that span reads GA. Asparagine 179 provides a ligand contact to Mg(2+).

This sequence belongs to the transketolase family. DXPS subfamily. As to quaternary structure, homodimer. Mg(2+) is required as a cofactor. Requires thiamine diphosphate as cofactor.

It carries out the reaction D-glyceraldehyde 3-phosphate + pyruvate + H(+) = 1-deoxy-D-xylulose 5-phosphate + CO2. It functions in the pathway metabolic intermediate biosynthesis; 1-deoxy-D-xylulose 5-phosphate biosynthesis; 1-deoxy-D-xylulose 5-phosphate from D-glyceraldehyde 3-phosphate and pyruvate: step 1/1. Its function is as follows. Catalyzes the acyloin condensation reaction between C atoms 2 and 3 of pyruvate and glyceraldehyde 3-phosphate to yield 1-deoxy-D-xylulose-5-phosphate (DXP). The protein is 1-deoxy-D-xylulose-5-phosphate synthase of Acidovorax ebreus (strain TPSY) (Diaphorobacter sp. (strain TPSY)).